The chain runs to 374 residues: UDP-N-acetylglucosamine--N-acetylmuramyl-(pentapeptide) pyrophosphoryl-undecaprenol N-acetylglucosamine transferase (374 aa).

UDP-N-acetyl-alpha-D-glucosamine-binding positions include Thr-10–Gly-12, Asn-124, Arg-166, Ser-196, and Gln-294.

It belongs to the glycosyltransferase 28 family. MurG subfamily.

Its subcellular location is the cell membrane. The catalysed reaction is di-trans,octa-cis-undecaprenyl diphospho-N-acetyl-alpha-D-muramoyl-L-alanyl-D-glutamyl-meso-2,6-diaminopimeloyl-D-alanyl-D-alanine + UDP-N-acetyl-alpha-D-glucosamine = di-trans,octa-cis-undecaprenyl diphospho-[N-acetyl-alpha-D-glucosaminyl-(1-&gt;4)]-N-acetyl-alpha-D-muramoyl-L-alanyl-D-glutamyl-meso-2,6-diaminopimeloyl-D-alanyl-D-alanine + UDP + H(+). It functions in the pathway cell wall biogenesis; peptidoglycan biosynthesis. Functionally, cell wall formation. Catalyzes the transfer of a GlcNAc subunit on undecaprenyl-pyrophosphoryl-MurNAc-pentapeptide (lipid intermediate I) to form undecaprenyl-pyrophosphoryl-MurNAc-(pentapeptide)GlcNAc (lipid intermediate II). The sequence is that of UDP-N-acetylglucosamine--N-acetylmuramyl-(pentapeptide) pyrophosphoryl-undecaprenol N-acetylglucosamine transferase from Symbiobacterium thermophilum (strain DSM 24528 / JCM 14929 / IAM 14863 / T).